The following is a 285-amino-acid chain: MHTVWKGSISFGLVNVPVKMHAATETHEFHFNYLHKDCHNRIRYIKKCPHCEVEVAAENIIKGYEYEKDHYVIMEEEDLASLEAPLSRSIDILDFIDLSDIDPIYYQKSYYLSPEEAAHKAYKLLCQAMSDTGKVAIAKLTMRSKQHLACLRIIDQSIMVLETMYYPAEIRHLEASWDNVSPTDTEIAMARQLIENLAAPFAPEKYRDELREQVKELIEKKVSGETYRVAAAPEPGKVVDLMEALRASIAMTDQKKQQNTAESETEEKPTKSTLTPRGRRKVKGA.

A Ku domain is found at I9–S176. Residues A250–A285 form a disordered region.

The protein belongs to the prokaryotic Ku family. Homodimer. Interacts with LigD.

Functionally, with LigD forms a non-homologous end joining (NHEJ) DNA repair enzyme, which repairs dsDNA breaks with reduced fidelity. Binds linear dsDNA with 5'- and 3'- overhangs but not closed circular dsDNA nor ssDNA. Recruits and stimulates the ligase activity of LigD. In Desulfitobacterium hafniense (strain DSM 10664 / DCB-2), this protein is Non-homologous end joining protein Ku.